The primary structure comprises 133 residues: uncharacterized protein (133 aa).

Residues 91 to 113 (LFATALISCIPSSFSALSFLATL) traverse the membrane as a helical segment.

It is found in the membrane. This is an uncharacterized protein from Saccharomyces cerevisiae (strain ATCC 204508 / S288c) (Baker's yeast).